Here is an 878-residue protein sequence, read N- to C-terminus: Alanine--tRNA ligase (878 aa).

4 residues coordinate Zn(2+): histidine 566, histidine 570, cysteine 668, and histidine 672.

It belongs to the class-II aminoacyl-tRNA synthetase family. Zn(2+) serves as cofactor.

Its subcellular location is the cytoplasm. The catalysed reaction is tRNA(Ala) + L-alanine + ATP = L-alanyl-tRNA(Ala) + AMP + diphosphate. In terms of biological role, catalyzes the attachment of alanine to tRNA(Ala) in a two-step reaction: alanine is first activated by ATP to form Ala-AMP and then transferred to the acceptor end of tRNA(Ala). Also edits incorrectly charged Ser-tRNA(Ala) and Gly-tRNA(Ala) via its editing domain. This is Alanine--tRNA ligase from Bacillus velezensis (strain DSM 23117 / BGSC 10A6 / LMG 26770 / FZB42) (Bacillus amyloliquefaciens subsp. plantarum).